A 173-amino-acid chain; its full sequence is MTTIVSVRRGRQVALGGDGQVTLGAVVAKASARKVRRLYHDKVLAGFAGGTADAFTLFERFEAKLEKHQGHLLRSAVELAKDWRTDRILRRLEAMLVVADHEATLIITGAGDVIEPEQGLAAIGSGGAYAQAAARALLENTNLGPAETVAKALTIAGDICIYTNQVHVIEQLD.

Residue Thr2 is part of the active site. 3 residues coordinate Na(+): Gly157, Cys160, and Thr163.

It belongs to the peptidase T1B family. HslV subfamily. As to quaternary structure, a double ring-shaped homohexamer of HslV is capped on each side by a ring-shaped HslU homohexamer. The assembly of the HslU/HslV complex is dependent on binding of ATP.

It is found in the cytoplasm. It carries out the reaction ATP-dependent cleavage of peptide bonds with broad specificity.. With respect to regulation, allosterically activated by HslU binding. Protease subunit of a proteasome-like degradation complex believed to be a general protein degrading machinery. The polypeptide is ATP-dependent protease subunit HslV (Nitrosomonas eutropha (strain DSM 101675 / C91 / Nm57)).